A 266-amino-acid polypeptide reads, in one-letter code: Proteasome subunit beta type-7 (266 aa).

Positions 1–34 (MENLNRGGFDFDLCNRNNVLEKTGLRMKGFMKTG) are cleaved as a propeptide — removed in mature form. Catalysis depends on Thr35, which acts as the Nucleophile.

The protein belongs to the peptidase T1B family. As to quaternary structure, the 26S proteasome consists of a 20S proteasome core and two 19S regulatory subunits. The 20S proteasome core is composed of 28 subunits that are arranged in four stacked rings, resulting in a barrel-shaped structure. The two end rings are each formed by seven alpha subunits, and the two central rings are each formed by seven beta subunits. The catalytic chamber with the active sites is on the inside of the barrel.

The protein resides in the cytoplasm. Its subcellular location is the nucleus. It catalyses the reaction Cleavage of peptide bonds with very broad specificity.. Functionally, the proteasome is a multicatalytic proteinase complex which is characterized by its ability to cleave peptides with Arg, Phe, Tyr, Leu, and Glu adjacent to the leaving group at neutral or slightly basic pH. The proteasome has an ATP-dependent proteolytic activity. The chain is Proteasome subunit beta type-7 (psmB7) from Dictyostelium discoideum (Social amoeba).